We begin with the raw amino-acid sequence, 1489 residues long: Calmodulin-regulated spectrin-associated protein 2 (1489 aa).

The Calponin-homology (CH) domain occupies 222 to 335 (WKLVPARYRK…FMAELFWWFE (114 aa)). The segment at 375 to 415 (SSDFPSSGEGATFTQSHHHLPSRYSRPQAHSSASGGIRRSS) is disordered. Residues 405 to 415 (SSASGGIRRSS) are compositionally biased toward low complexity. Phosphoserine is present on residues Ser-416 and Ser-418. Thr-426 is subject to Phosphothreonine. 5 positions are modified to phosphoserine: Ser-464, Ser-598, Ser-599, Ser-611, and Ser-673. Disordered regions lie at residues 611–639 (SPIT…EDSS) and 668–730 (TREA…GSEL). Over residues 668 to 679 (TREALSPCPSTV) the composition is skewed to polar residues. Thr-678 is subject to Phosphothreonine. Ser-680 carries the phosphoserine modification. Residues 680 to 699 (STKSQPGSSASSSSGVKMTS) are compositionally biased toward low complexity. The segment covering 703 to 713 (QKFRKLNHTDG) has biased composition (basic and acidic residues). A coiled-coil region spans residues 756–793 (LLASEMVHLRMKLEEKRRAIEAQKKKMEAAFTKQRQKM). Residues 812 to 844 (LREEAAGAEDEKVYTDRAKEKESQKTDGQRSKS) are disordered. Ser-862 is modified (phosphoserine). Positions 887–926 (EILEYTKSIEKLNSSLHFLQQEMQRLSLQQEMLMQMREQQ) form a coiled coil. An MBD region region spans residues 922–1034 (MREQQSWVIS…IQTRSFVCFG (113 aa)). The interval 925-1017 (QQSWVISPPQ…SVDSLPRLRR (93 aa)) is disordered. Phosphoserine is present on residues Ser-931 and Ser-936. Residues 960–989 (SSDSPRPTHPSPQSSNRKSASFSVKSQRTP) show a composition bias toward polar residues. Phosphothreonine occurs at positions 997, 1002, and 1004. Residues Ser-1008 and Ser-1019 each carry the phosphoserine modification. Disordered regions lie at residues 1032–1078 (CFGD…PFES), 1096–1152 (PNED…DKEQ), and 1191–1349 (KETQ…EYTG). Positions 1039-1075 (PQLKESKPKEEVKKEELESKGTLEQRGHNPEEKEIKP) are enriched in basic and acidic residues. Positions 1105–1117 (TEPPPKPVFPPTA) are enriched in pro residues. 2 stretches are compositionally biased toward basic and acidic residues: residues 1132–1152 (KPPE…DKEQ) and 1191–1252 (KETQ…DTVI). Ser-1148 carries the phosphoserine modification. A coiled-coil region spans residues 1166–1238 (KDDQKAENDM…REFIRQEYMR (73 aa)). The segment covering 1287–1299 (SSLSLASLNTGDN) has biased composition (polar residues). Ser-1313, Ser-1319, and Ser-1321 each carry phosphoserine. Residues 1334–1346 (NASTTSSVASGTE) are compositionally biased toward polar residues. A CKK domain is found at 1349 to 1483 (GPKLYKEPSA…QTKRPVTPKK (135 aa)).

This sequence belongs to the CAMSAP1 family. As to quaternary structure, interacts with CAMSAP3. Interacts with KATNA1 and KATNB1; leading to regulate the length of CAMSAP2-decorated microtubule stretches. Interacts with a complex formed by AKAP9 and PDE4DIP isoform 13/MMG8/SMYLE, which recruits CAMSAP2 to the Golgi. Interacts with MAPRE1/EB1.

Its subcellular location is the cytoplasm. The protein resides in the cytoskeleton. It is found in the golgi apparatus. The protein localises to the cilium basal body. In terms of biological role, key microtubule-organizing protein that specifically binds the minus-end of non-centrosomal microtubules and regulates their dynamics and organization. Specifically recognizes growing microtubule minus-ends and autonomously decorates and stabilizes microtubule lattice formed by microtubule minus-end polymerization. Acts on free microtubule minus-ends that are not capped by microtubule-nucleating proteins or other factors and protects microtubule minus-ends from depolymerization. In addition, it also reduces the velocity of microtubule polymerization. Through the microtubule cytoskeleton, also regulates the organization of cellular organelles including the Golgi and the early endosomes. Essential for the tethering, but not for nucleation of non-centrosomal microtubules at the Golgi: together with Golgi-associated proteins AKAP9 and PDE4DIP, required to tether non-centrosomal minus-end microtubules to the Golgi, an important step for polarized cell movement. Also acts as a regulator of neuronal polarity and development: localizes to non-centrosomal microtubule minus-ends in neurons and stabilizes non-centrosomal microtubules, which is required for neuronal polarity, axon specification and dendritic branch formation. Through the microtubule cytoskeleton, regulates the autophagosome transport. In Homo sapiens (Human), this protein is Calmodulin-regulated spectrin-associated protein 2.